A 447-amino-acid chain; its full sequence is Phosphoglucosamine mutase (447 aa).

Residue Ser-102 is the Phosphoserine intermediate of the active site. Ser-102, Asp-241, Asp-243, and Asp-245 together coordinate Mg(2+). Ser-102 is subject to Phosphoserine.

The protein belongs to the phosphohexose mutase family. It depends on Mg(2+) as a cofactor. In terms of processing, activated by phosphorylation.

The catalysed reaction is alpha-D-glucosamine 1-phosphate = D-glucosamine 6-phosphate. In terms of biological role, catalyzes the conversion of glucosamine-6-phosphate to glucosamine-1-phosphate. The chain is Phosphoglucosamine mutase from Methylococcus capsulatus (strain ATCC 33009 / NCIMB 11132 / Bath).